Reading from the N-terminus, the 121-residue chain is Large ribosomal subunit protein uL18 (121 aa).

It belongs to the universal ribosomal protein uL18 family. In terms of assembly, part of the 50S ribosomal subunit; part of the 5S rRNA/L5/L18/L25 subcomplex. Contacts the 5S and 23S rRNAs.

Functionally, this is one of the proteins that bind and probably mediate the attachment of the 5S RNA into the large ribosomal subunit, where it forms part of the central protuberance. The chain is Large ribosomal subunit protein uL18 from Herpetosiphon aurantiacus (strain ATCC 23779 / DSM 785 / 114-95).